The following is a 444-amino-acid chain: Ras-related protein RabX (444 aa).

29–36 contacts GTP; that stretch reads GGDVCSKN. The Effector region motif lies at 51-58; that stretch reads LIQVFDDY. 73 to 77 contacts GTP; sequence EFSSI. The segment at 91–136 is disordered; that stretch reads ENNKNKNNNNNYNYNNNNYNNNNNNNNNNNNNNNNNNNNNNNNNNS. Over residues 95–135 the composition is skewed to low complexity; it reads NKNNNNNYNYNNNNYNNNNNNNNNNNNNNNNNNNNNNNNNN. 207–210 serves as a coordination point for GTP; sequence NDSN. Disordered regions lie at residues 213–232 and 298–401; these read TPNF…SNII and LQGD…NNDL. Low complexity-rich tracts occupy residues 217-232 and 303-399; these read SDSS…SNII and NNNN…TYNN. A lipid anchor (S-palmitoyl cysteine) is attached at Cys439. Cys441 carries the post-translational modification Cysteine methyl ester. Residue Cys441 is the site of S-geranylgeranyl cysteine attachment. A propeptide spans 442-444 (removed in mature form); the sequence is NLM.

This sequence belongs to the small GTPase superfamily. Rab family.

The protein localises to the cell membrane. The polypeptide is Ras-related protein RabX (rabX) (Dictyostelium discoideum (Social amoeba)).